We begin with the raw amino-acid sequence, 156 residues long: Maintenance of carboxysome distribution protein B (156 aa).

Positions Met1 to Glu55 are required for interaction with McdA:DNA complex. Residues Met1–Phe79 form a disordered region. Polar residues predominate over residues Val24–Lys50. Residues Ala51–Glu63 are compositionally biased toward basic and acidic residues. Residues Pro122–Leu156 are a coiled coil.

Homodimerizes; may exist in higher order oligomers in solution. Forms a complex with McdA:DNA. Homohexamerizes, interacts with shell components of the carboxysome.

The protein localises to the carboxysome. In terms of biological role, mcdA and McdB together mediate carboxysome (Cb) spacing, size, ultrastructure and probably inheritance in the cell, together they prevent Cb aggregation. McdA is an ATPase that forms dynamic gradients on the nucleoid in response to adapter protein McdB, which associates with carboxysomes. The interplay between McdA gradients on the nucleoid and McdB-bound carboxysomes result in the equal spacing of Cbs along the cell length. Stimulates the ATPase activity of McdA, causing McdA to be released from DNA. Undergoes liquid-liquid phase separation. Its function is as follows. Incorrect positioning (aggregation) of carboxysomes results in reduced CO(2) fixation by encapsulated ribulose-1,5-bisphosphate carboxylase (RuBisCO, cbbL/cbbS), which leads to slower growth. The chain is Maintenance of carboxysome distribution protein B from Gloeothece citriformis (strain PCC 7424) (Cyanothece sp. (strain PCC 7424)).